The following is a 324-amino-acid chain: Holliday junction branch migration complex subunit RuvB (324 aa).

The large ATPase domain (RuvB-L) stretch occupies residues 1-180; that stretch reads MKSISCGKEY…FGIPLHLEFY (180 aa). Residues Ile-19, Arg-20, Gly-61, Lys-64, Thr-65, Thr-66, 127–129, Arg-170, Tyr-180, and Arg-217 each bind ATP; that span reads EDF. Thr-65 provides a ligand contact to Mg(2+). Residues 181–251 are small ATPAse domain (RuvB-S); the sequence is SFEELVNIIK…VADSVLLKLG (71 aa). Residues 254–324 are head domain (RuvB-H); the sequence is KMGLNKLDMN…TDQAKEYLSL (71 aa). Arg-307 and Arg-312 together coordinate DNA.

The protein belongs to the RuvB family. In terms of assembly, homohexamer. Forms an RuvA(8)-RuvB(12)-Holliday junction (HJ) complex. HJ DNA is sandwiched between 2 RuvA tetramers; dsDNA enters through RuvA and exits via RuvB. An RuvB hexamer assembles on each DNA strand where it exits the tetramer. Each RuvB hexamer is contacted by two RuvA subunits (via domain III) on 2 adjacent RuvB subunits; this complex drives branch migration. In the full resolvosome a probable DNA-RuvA(4)-RuvB(12)-RuvC(2) complex forms which resolves the HJ.

The protein resides in the cytoplasm. The enzyme catalyses ATP + H2O = ADP + phosphate + H(+). In terms of biological role, the RuvA-RuvB-RuvC complex processes Holliday junction (HJ) DNA during genetic recombination and DNA repair, while the RuvA-RuvB complex plays an important role in the rescue of blocked DNA replication forks via replication fork reversal (RFR). RuvA specifically binds to HJ cruciform DNA, conferring on it an open structure. The RuvB hexamer acts as an ATP-dependent pump, pulling dsDNA into and through the RuvAB complex. RuvB forms 2 homohexamers on either side of HJ DNA bound by 1 or 2 RuvA tetramers; 4 subunits per hexamer contact DNA at a time. Coordinated motions by a converter formed by DNA-disengaged RuvB subunits stimulates ATP hydrolysis and nucleotide exchange. Immobilization of the converter enables RuvB to convert the ATP-contained energy into a lever motion, pulling 2 nucleotides of DNA out of the RuvA tetramer per ATP hydrolyzed, thus driving DNA branch migration. The RuvB motors rotate together with the DNA substrate, which together with the progressing nucleotide cycle form the mechanistic basis for DNA recombination by continuous HJ branch migration. Branch migration allows RuvC to scan DNA until it finds its consensus sequence, where it cleaves and resolves cruciform DNA. The polypeptide is Holliday junction branch migration complex subunit RuvB (Wolbachia sp. subsp. Drosophila simulans (strain wRi)).